Reading from the N-terminus, the 215-residue chain is Sperm acrosome membrane-associated protein 3 (215 aa).

At 1 to 63 (MVSALRGAPL…EARSRALRRR (63 aa)) the chain is on the cytoplasmic side. Residues 64–84 (WCPAGIMLLALVCLLSCLLPS) form a helical; Signal-anchor for type II membrane protein membrane-spanning segment. Topologically, residues 85–215 (SEAKLYGRCE…LTEWVDGCDF (131 aa)) are extracellular. The C-type lysozyme domain occupies 88 to 215 (KLYGRCELAR…LTEWVDGCDF (128 aa)). 4 cysteine pairs are disulfide-bonded: C93-C213, C117-C201, C151-C166, and C162-C180.

It belongs to the glycosyl hydrolase 22 family. In terms of assembly, interacts with ASTL. The processed form derives from the membrane form by proteolytic processing. As to expression, the processed form is expressed in sperm (at protein level). Expressed in testis, epididymis and placenta.

The protein resides in the cytoplasmic vesicle. Its subcellular location is the secretory vesicle. The protein localises to the acrosome membrane. It localises to the secreted. Sperm surface membrane protein that may be involved in sperm-egg plasma membrane adhesion and fusion during fertilization. It could be a potential receptor for the egg oligosaccharide residue N-acetylglucosamine, which is present in the extracellular matrix over the egg plasma membrane. The processed form has no detectable bacteriolytic activity in vitro. The sequence is that of Sperm acrosome membrane-associated protein 3 (SPACA3) from Homo sapiens (Human).